The sequence spans 456 residues: Myricetin 3-O-rhamnosyltransferase UGT77B2 (456 aa).

His19 acts as the Proton acceptor in catalysis. His19 is a binding site for an anthocyanidin. Asp116 acts as the Charge relay in catalysis. Position 147 (His147) interacts with an anthocyanidin. The UDP-beta-L-rhamnose site is built by Thr279, Ala334, His351, Asn355, and Glu359. Ala374 provides a ligand contact to an anthocyanidin.

This sequence belongs to the UDP-glycosyltransferase family. In terms of tissue distribution, expressed in young cromes.

It carries out the reaction myricetin + UDP-beta-L-rhamnose = myricetin 3-O-alpha-L-rhamnoside + UDP + H(+). It functions in the pathway flavonoid metabolism. Rhamnosyltransferase involved in montbretin A (MbA) biosynthesis. Catalyzes the 3-O rhamnosylation of myricetin to produce myricetin 3-O-alpha-L-rhamnoside (MR), a precursor of MbA. MbA is a potent inhibitor of human pancreatic alpha-amylase and is being developed as drug candidate to treat type-2 diabetes. In vitro, is able to transfer UDP-glucose and UDP-xylose with 50-fold less efficiency compared with UDP-rhamnose. In vitro, can use kaempferol or quercetin as substrates, although these two flavonols may not be physiological substrates in vivo. This Crocosmia x crocosmiiflora (Montbretia) protein is Myricetin 3-O-rhamnosyltransferase UGT77B2.